Reading from the N-terminus, the 322-residue chain is Dirigent protein 9 (322 aa).

The signal sequence occupies residues 1–20 (MAKALHITIFLFLISSNLLA).

This sequence belongs to the plant dirigent protein family. Homodimer.

It is found in the secreted. The protein resides in the extracellular space. Its subcellular location is the apoplast. Dirigent proteins impart stereoselectivity on the phenoxy radical-coupling reaction, yielding optically active lignans from two molecules of coniferyl alcohol in the biosynthesis of lignans, flavonolignans, and alkaloids and thus plays a central role in plant secondary metabolism. This Arabidopsis thaliana (Mouse-ear cress) protein is Dirigent protein 9 (DIR9).